A 256-amino-acid chain; its full sequence is Small ribosomal subunit protein uS2 (256 aa).

Belongs to the universal ribosomal protein uS2 family.

This Brucella abortus (strain S19) protein is Small ribosomal subunit protein uS2.